Here is a 634-residue protein sequence, read N- to C-terminus: Probable potassium transport system protein Kup (634 aa).

12 helical membrane-spanning segments follow: residues 21 to 41, 61 to 81, 110 to 130, 148 to 168, 180 to 200, 217 to 237, 258 to 278, 296 to 316, 348 to 368, 377 to 397, 408 to 428, and 432 to 452; these read IILS…LYTL, ILSL…VAVI, IYIV…DGVI, PHMK…LFLC, FGPI…YNIA, FFLE…LAVT, WMYV…ALVL, GLYP…QALI, IYVP…VIGF, AYGV…IIYA, LWMM…ANII, and DGAW…RTWL.

This sequence belongs to the HAK/KUP transporter (TC 2.A.72) family.

Its subcellular location is the cell inner membrane. The catalysed reaction is K(+)(in) + H(+)(in) = K(+)(out) + H(+)(out). Transport of potassium into the cell. Likely operates as a K(+):H(+) symporter. This chain is Probable potassium transport system protein Kup, found in Xylella fastidiosa (strain 9a5c).